Here is a 328-residue protein sequence, read N- to C-terminus: Chlorate reductase subunit beta (328 aa).

4Fe-4S ferredoxin-type domains follow at residues 6-35 (VAYV…RDGR), 125-156 (NHSF…KRPE), and 158-187 (GIVV…FNLQ). Residues Cys-15, Cys-18, Cys-21, Cys-25, Cys-134, Cys-137, and Cys-142 each coordinate [4Fe-4S] cluster. [3Fe-4S] cluster is bound by residues Cys-146, Cys-167, and Cys-173. [4Fe-4S] cluster contacts are provided by Cys-177, Cys-194, Cys-197, Cys-209, and Cys-213.

As to quaternary structure, heterotrimer of alpha, beta and gamma subunits. It depends on [3Fe-4S] cluster as a cofactor. The cofactor is [4Fe-4S] cluster.

Its subcellular location is the periplasm. Electron transfer subunit of the terminal reductase during anaerobic growth on chlorate. The chain is Chlorate reductase subunit beta (clrB) from Ideonella dechloratans.